We begin with the raw amino-acid sequence, 316 residues long: Ribosomal RNA large subunit methyltransferase F (316 aa).

This sequence belongs to the methyltransferase superfamily. METTL16/RlmF family.

Its subcellular location is the cytoplasm. The catalysed reaction is adenosine(1618) in 23S rRNA + S-adenosyl-L-methionine = N(6)-methyladenosine(1618) in 23S rRNA + S-adenosyl-L-homocysteine + H(+). Functionally, specifically methylates the adenine in position 1618 of 23S rRNA. The chain is Ribosomal RNA large subunit methyltransferase F from Pseudomonas entomophila (strain L48).